Reading from the N-terminus, the 151-residue chain is Gametocyte-specific factor 1-like (151 aa).

CHHC U11-48K-type zinc fingers lie at residues 6-33 (IEICPYNPHHRIPLSRFQYHLASCRKKN) and 40-67 (MASCKYNACHVVPIRKLAEHEATCVNRS). Zn(2+)-binding residues include C9, H15, H25, C29, C43, H49, H59, and C63. Positions 130 to 151 (QESRGGDQCPEDPQTRTRKANF) are disordered.

Belongs to the UPF0224 (FAM112) family.

The sequence is that of Gametocyte-specific factor 1-like (Gtsf1l) from Mus musculus (Mouse).